The following is a 154-amino-acid chain: Transcription antitermination protein NusB (154 aa).

Belongs to the NusB family.

In terms of biological role, involved in transcription antitermination. Required for transcription of ribosomal RNA (rRNA) genes. Binds specifically to the boxA antiterminator sequence of the ribosomal RNA (rrn) operons. The chain is Transcription antitermination protein NusB from Oleidesulfovibrio alaskensis (strain ATCC BAA-1058 / DSM 17464 / G20) (Desulfovibrio alaskensis).